The sequence spans 103 residues: Large ribosomal subunit protein bL21 (103 aa).

The protein belongs to the bacterial ribosomal protein bL21 family. In terms of assembly, part of the 50S ribosomal subunit. Contacts protein L20.

In terms of biological role, this protein binds to 23S rRNA in the presence of protein L20. This is Large ribosomal subunit protein bL21 from Photobacterium profundum (strain SS9).